Here is a 158-residue protein sequence, read N- to C-terminus: Endoribonuclease YbeY (158 aa).

Positions 124, 128, and 134 each coordinate Zn(2+).

It belongs to the endoribonuclease YbeY family. Requires Zn(2+) as cofactor.

Its subcellular location is the cytoplasm. Functionally, single strand-specific metallo-endoribonuclease involved in late-stage 70S ribosome quality control and in maturation of the 3' terminus of the 16S rRNA. In Caldicellulosiruptor bescii (strain ATCC BAA-1888 / DSM 6725 / KCTC 15123 / Z-1320) (Anaerocellum thermophilum), this protein is Endoribonuclease YbeY.